The primary structure comprises 158 residues: Photosystem I assembly protein Ycf3 (158 aa).

3 TPR repeats span residues 35–68 (AFSYYREGMAAQAEGEYAQALESYYHALEFEEDV), 72–105 (SYIIYNIGLIYASNGEDEQALEYYHQALELNPRL), and 113–146 (AVIYHKQGMTYQDEQLLQKAAAYWRKAIQLAPGQ).

The protein belongs to the Ycf3 family.

The protein localises to the plastid. It is found in the chloroplast thylakoid membrane. In terms of biological role, essential for the assembly of the photosystem I (PSI) complex. May act as a chaperone-like factor to guide the assembly of the PSI subunits. The chain is Photosystem I assembly protein Ycf3 from Cyanidioschyzon merolae (strain NIES-3377 / 10D) (Unicellular red alga).